The primary structure comprises 393 residues: MILVINSGSSSIKFKLFDTSKTIEPILDGLAERIGIDGFLKFEHNNQKYKFEDPLPDHEHAIQLILNKLLELKIISNIDEINGVGFRVVHGGEISHSSIITDEILSKIQDSVKLAPLHNPAAIIAIKAVKKLMPNTSMVACFDTAFHQTMPEVNYLYTVPYKWYEEFGVRKYGFHGISYEYIVNKSSEILNKKKENLNLIVCHLGNGASISCIKDGKSYDTSMGLTPLAGLMMGTRSGDIDVSICEYIAKQTNTDIFSITQTLNKQSGLLGLSQVSADMRDVLEQYDRNDKKAVVAVEKYVQIVADFIVKYANYLDNIDAVVFTAGIGENADVIRDLICKKVKLLNLQIDQDKNQAKYSDYKLISSEKSKIPVYAIRTNEEKMICLDTLNLIK.

N6 contacts Mg(2+). An ATP-binding site is contributed by K13. Substrate is bound at residue R87. The active-site Proton donor/acceptor is the D143. ATP is bound by residues 203–207 (HLGNG), 278–280 (DMR), and 326–330 (GIGEN). Position 380 (E380) interacts with Mg(2+).

The protein belongs to the acetokinase family. Homodimer. The cofactor is Mg(2+). Requires Mn(2+) as cofactor.

The protein resides in the cytoplasm. The catalysed reaction is acetate + ATP = acetyl phosphate + ADP. It participates in metabolic intermediate biosynthesis; acetyl-CoA biosynthesis; acetyl-CoA from acetate: step 1/2. Catalyzes the formation of acetyl phosphate from acetate and ATP. Can also catalyze the reverse reaction. This chain is Acetate kinase, found in Mycoplasma mycoides subsp. mycoides SC (strain CCUG 32753 / NCTC 10114 / PG1).